Reading from the N-terminus, the 1051-residue chain is Eukaryotic translation initiation factor 3 subunit A (1051 aa).

A coiled-coil region spans residues leucine 92–alanine 121. The 185-residue stretch at methionine 339–phenylalanine 523 folds into the PCI domain. The stretch at arginine 608 to lysine 905 forms a coiled coil. 4 stretches are compositionally biased toward basic and acidic residues: residues alanine 617–arginine 632, glutamate 642–glutamine 664, lysine 794–arginine 901, and alanine 916–alanine 926. 2 disordered regions span residues alanine 617–glutamine 664 and lysine 794–glutamine 1051. Low complexity-rich tracts occupy residues lysine 948–glutamate 961 and serine 1010–proline 1039.

Belongs to the eIF-3 subunit A family. As to quaternary structure, component of the eukaryotic translation initiation factor 3 (eIF-3) complex.

The protein localises to the cytoplasm. Its function is as follows. RNA-binding component of the eukaryotic translation initiation factor 3 (eIF-3) complex, which is involved in protein synthesis of a specialized repertoire of mRNAs and, together with other initiation factors, stimulates binding of mRNA and methionyl-tRNAi to the 40S ribosome. The eIF-3 complex specifically targets and initiates translation of a subset of mRNAs involved in cell proliferation. The sequence is that of Eukaryotic translation initiation factor 3 subunit A (tif32) from Aspergillus fumigatus (strain CBS 144.89 / FGSC A1163 / CEA10) (Neosartorya fumigata).